The primary structure comprises 547 residues: Chaperonin GroEL (547 aa).

ATP-binding positions include 30–33 (TLGP), lysine 51, 87–91 (DGTTT), glycine 415, and aspartate 496.

It belongs to the chaperonin (HSP60) family. In terms of assembly, forms a cylinder of 14 subunits composed of two heptameric rings stacked back-to-back. Interacts with the co-chaperonin GroES.

The protein resides in the cytoplasm. It catalyses the reaction ATP + H2O + a folded polypeptide = ADP + phosphate + an unfolded polypeptide.. Its function is as follows. Together with its co-chaperonin GroES, plays an essential role in assisting protein folding. The GroEL-GroES system forms a nano-cage that allows encapsulation of the non-native substrate proteins and provides a physical environment optimized to promote and accelerate protein folding. The polypeptide is Chaperonin GroEL (Haemophilus ducreyi (strain 35000HP / ATCC 700724)).